We begin with the raw amino-acid sequence, 297 residues long: Probable porphobilinogen deaminase (297 aa).

Cys241 carries the S-(dipyrrolylmethanemethyl)cysteine modification.

It belongs to the HMBS family. Requires dipyrromethane as cofactor.

It catalyses the reaction 4 porphobilinogen + H2O = hydroxymethylbilane + 4 NH4(+). Its pathway is porphyrin-containing compound metabolism; protoporphyrin-IX biosynthesis; coproporphyrinogen-III from 5-aminolevulinate: step 2/4. Tetrapolymerization of the monopyrrole PBG into the hydroxymethylbilane pre-uroporphyrinogen in several discrete steps. This Pyrobaculum arsenaticum (strain DSM 13514 / JCM 11321 / PZ6) protein is Probable porphobilinogen deaminase.